The chain runs to 340 residues: UDP-N-acetylenolpyruvoylglucosamine reductase (340 aa).

The region spanning 14–185 (HVEATARWLL…VAVEFNLPLL (172 aa)) is the FAD-binding PCMH-type domain. Arg-162 is an active-site residue. Ser-235 serves as the catalytic Proton donor. Glu-332 is a catalytic residue.

The protein belongs to the MurB family. FAD is required as a cofactor.

It localises to the cytoplasm. The catalysed reaction is UDP-N-acetyl-alpha-D-muramate + NADP(+) = UDP-N-acetyl-3-O-(1-carboxyvinyl)-alpha-D-glucosamine + NADPH + H(+). It functions in the pathway cell wall biogenesis; peptidoglycan biosynthesis. Cell wall formation. The polypeptide is UDP-N-acetylenolpyruvoylglucosamine reductase (Xanthomonas oryzae pv. oryzae (strain KACC10331 / KXO85)).